Here is a 110-residue protein sequence, read N- to C-terminus: Insulin (110 aa).

The N-terminal stretch at 1–24 is a signal peptide; sequence MALWMRLLPLLALLALWGPDPAAA. Cystine bridges form between Cys31-Cys96, Cys43-Cys109, and Cys95-Cys100. A propeptide spans 57-87 (c peptide); it reads EAEDLQVGQVELGGGPGAGSLQPLALEGSLQ.

The protein belongs to the insulin family. As to quaternary structure, heterodimer of a B chain and an A chain linked by two disulfide bonds.

It is found in the secreted. In terms of biological role, insulin decreases blood glucose concentration. It increases cell permeability to monosaccharides, amino acids and fatty acids. It accelerates glycolysis, the pentose phosphate cycle, and glycogen synthesis in liver. This chain is Insulin (INS), found in Gorilla gorilla gorilla (Western lowland gorilla).